Here is a 291-residue protein sequence, read N- to C-terminus: Acetyl-coenzyme A carboxylase carboxyl transferase subunit beta (291 aa).

Positions 23-291 constitute a CoA carboxyltransferase N-terminal domain; that stretch reads VWHKCPSCTA…PPDLPVEESV (269 aa). Residues C27, C30, C46, and C49 each coordinate Zn(2+). The C4-type zinc finger occupies 27–49; the sequence is CPSCTAVLYRVELERNLEVCPKC.

Belongs to the AccD/PCCB family. Acetyl-CoA carboxylase is a heterohexamer composed of biotin carboxyl carrier protein (AccB), biotin carboxylase (AccC) and two subunits each of ACCase subunit alpha (AccA) and ACCase subunit beta (AccD). The cofactor is Zn(2+).

Its subcellular location is the cytoplasm. The catalysed reaction is N(6)-carboxybiotinyl-L-lysyl-[protein] + acetyl-CoA = N(6)-biotinyl-L-lysyl-[protein] + malonyl-CoA. It participates in lipid metabolism; malonyl-CoA biosynthesis; malonyl-CoA from acetyl-CoA: step 1/1. In terms of biological role, component of the acetyl coenzyme A carboxylase (ACC) complex. Biotin carboxylase (BC) catalyzes the carboxylation of biotin on its carrier protein (BCCP) and then the CO(2) group is transferred by the transcarboxylase to acetyl-CoA to form malonyl-CoA. The polypeptide is Acetyl-coenzyme A carboxylase carboxyl transferase subunit beta (Coxiella burnetii (strain RSA 331 / Henzerling II)).